Here is a 440-residue protein sequence, read N- to C-terminus: Tubulin beta-3 chain (440 aa).

GTP is bound by residues Gln-2, Glu-60, Ser-129, Gly-133, Thr-134, Gly-135, Asn-195, and Asn-217. Residue Glu-60 coordinates Mg(2+). The disordered stretch occupies residues Ser-411 to Glu-440. Residues Thr-420 to Glu-440 are compositionally biased toward acidic residues.

This sequence belongs to the tubulin family. As to quaternary structure, dimer of alpha and beta chains. A typical microtubule is a hollow water-filled tube with an outer diameter of 25 nm and an inner diameter of 15 nM. Alpha-beta heterodimers associate head-to-tail to form protofilaments running lengthwise along the microtubule wall with the beta-tubulin subunit facing the microtubule plus end conferring a structural polarity. Microtubules usually have 13 protofilaments but different protofilament numbers can be found in some organisms and specialized cells. Mg(2+) serves as cofactor.

It is found in the cytoplasm. Its subcellular location is the cytoskeleton. Tubulin is the major constituent of microtubules, a cylinder consisting of laterally associated linear protofilaments composed of alpha- and beta-tubulin heterodimers. Microtubules grow by the addition of GTP-tubulin dimers to the microtubule end, where a stabilizing cap forms. Below the cap, tubulin dimers are in GDP-bound state, owing to GTPase activity of alpha-tubulin. This is Tubulin beta-3 chain (TUBB3) from Pisum sativum (Garden pea).